The following is a 388-amino-acid chain: Chaperone protein DnaJ (388 aa).

The J domain occupies 5–70 (DYYTTLNISN…KKRNLYDQYG (66 aa)). The CR-type zinc-finger motif lies at 135-213 (GIKKEIRIPK…CFGQGRIKKS (79 aa)). Zn(2+) is bound by residues C148, C151, C165, C168, C187, C190, C201, and C204. CXXCXGXG motif repeat units follow at residues 148-155 (CQSCYGYG), 165-172 (CTSCNGHG), 187-194 (CSTCRGTG), and 201-208 (CKICFGQG).

This sequence belongs to the DnaJ family. As to quaternary structure, homodimer. It depends on Zn(2+) as a cofactor.

The protein resides in the cytoplasm. Its function is as follows. Participates actively in the response to hyperosmotic and heat shock by preventing the aggregation of stress-denatured proteins and by disaggregating proteins, also in an autonomous, DnaK-independent fashion. Unfolded proteins bind initially to DnaJ; upon interaction with the DnaJ-bound protein, DnaK hydrolyzes its bound ATP, resulting in the formation of a stable complex. GrpE releases ADP from DnaK; ATP binding to DnaK triggers the release of the substrate protein, thus completing the reaction cycle. Several rounds of ATP-dependent interactions between DnaJ, DnaK and GrpE are required for fully efficient folding. Also involved, together with DnaK and GrpE, in the DNA replication of plasmids through activation of initiation proteins. This chain is Chaperone protein DnaJ, found in Buchnera aphidicola subsp. Cinara cedri (strain Cc).